The primary structure comprises 452 residues: Low-affinity putrescine importer PlaP (452 aa).

At Met-1 to Lys-16 the chain is on the cytoplasmic side. The chain crosses the membrane as a helical span at residues Thr-17–Phe-37. Residues Asp-38–Asp-48 are Periplasmic-facing. The chain crosses the membrane as a helical span at residues Gly-49–Tyr-69. The Cytoplasmic segment spans residues Gly-70–Gly-95. Residues Phe-96 to Leu-116 traverse the membrane as a helical segment. Residues Ala-117–Ala-123 are Periplasmic-facing. Residues Leu-124 to Phe-144 traverse the membrane as a helical segment. Residues Asn-145–Val-158 are Cytoplasmic-facing. The chain crosses the membrane as a helical span at residues Ile-159–Phe-179. Residues Glu-180–His-199 are Periplasmic-facing. A helical transmembrane segment spans residues Val-200 to Ile-220. Over Ser-221–Ala-237 the chain is Cytoplasmic. Residues Ile-238 to Leu-258 form a helical membrane-spanning segment. Residues Tyr-259–Lys-283 are Periplasmic-facing. A helical membrane pass occupies residues Ala-284–Ala-304. Over His-305–Asn-339 the chain is Cytoplasmic. A run of 2 helical transmembrane segments spans residues Ile-340–Ala-360 and Leu-361–Phe-381. Residues Trp-382–His-394 are Cytoplasmic-facing. Residues Phe-395 to Leu-415 traverse the membrane as a helical segment. At Glu-416 to Glu-417 the chain is on the periplasmic side. The helical transmembrane segment at Ser-418 to Thr-438 threads the bilayer. Residues Lys-439–Ala-452 are Cytoplasmic-facing.

It belongs to the amino acid-polyamine-organocation (APC) superfamily.

The protein resides in the cell inner membrane. The catalysed reaction is putrescine(in) + H(+)(in) = putrescine(out) + H(+)(out). Functionally, putrescine importer. In Escherichia coli O157:H7, this protein is Low-affinity putrescine importer PlaP (plaP).